Reading from the N-terminus, the 499-residue chain is Serine/threonine-protein phosphatase 5 (499 aa).

A disordered region spans residues 1–23; it reads MAMAEGERTECAEPPRDEPPADG. N-acetylalanine is present on alanine 2. TPR repeat units lie at residues 28 to 61, 62 to 95, and 96 to 129; these read AEEL…NPSN, AIYY…DKKY, and IKGY…KPHD. Positions 184-499 are catalytic; it reads GKVTISFMKE…ANTLLQLGMM (316 aa). Positions 242, 244, and 271 each coordinate Mn(2+). Histidine 244 provides a ligand contact to substrate. Substrate contacts are provided by residues arginine 275 and 303–304; that span reads NH. Asparagine 303 contributes to the Mn(2+) binding site. The active-site Proton donor/acceptor is the histidine 304. Residue histidine 352 participates in Mn(2+) binding. Arginine 400 and histidine 427 together coordinate substrate. Residue histidine 427 participates in Mn(2+) binding. The segment at 495–499 is required for autoinhibition; the sequence is QLGMM.

It belongs to the PPP phosphatase family. PP-5 (PP-T) subfamily. Probably forms a complex composed of chaperones HSP90 and HSP70, co-chaperones STIP1/HOP, CDC37, PPP5C, PTGES3/p23, TSC1 and client protein TSC2. Probably forms a complex composed of chaperones HSP90 and HSP70, co-chaperones CDC37, PPP5C, TSC1 and client protein TSC2, CDK4, AKT, RAF1 and NR3C1; this complex does not contain co-chaperones STIP1/HOP and PTGES3/p23. Part of a complex with HSP90/HSP90AA1 and steroid receptors. Interacts (via TPR repeats) with HSP90AA1 (via TPR repeat-binding motif) or HSPA1A/HSPA1B; the interaction is direct and activates the phosphatase activity. Dissociates from HSPA1A/HSPA1B and HSP90AA1 in response to arachidonic acid. Interacts with CPNE1 (via VWFA domain). Interacts with CDC16, CDC27. Interacts with KLHDC10 (via the 6 Kelch repeats); inhibits the phosphatase activity on MAP3K5. Interacts with ATM and ATR; both interactions are induced by DNA damage and enhance ATM and ATR kinase activity. Interacts with RAD17; reduced by DNA damage. Interacts with nuclear receptors such as NR3C1/GCR and PPARG (activated by agonist); regulates their transactivation activities. Interacts (via TPR repeats) with S100 proteins S100A1, S100A2, S100A6, S100B and S100P; the interactions are calcium-dependent, strongly activate PPP5C phosphatase activity and compete with HSP90AA1 and MAP3K5 interactions. Interacts with SMAD2 and SMAD3 but not with SMAD1; decreases SMAD3 phosphorylation and protein levels. Interacts (via TPR repeats) with CRY1 and CRY2; the interaction with CRY2 down-regulates the phosphatase activity on CSNK1E. Interacts (via TPR repeats) with the active form of RAC1, GNA12 or GNA13; these interactions activate the phosphatase activity and translocate PPP5C to the cell membrane. Interacts with FLCN. Mg(2+) is required as a cofactor. The cofactor is Mn(2+). In terms of processing, activated by at least two different proteolytic cleavages producing a 56 kDa and a 50 kDa form. Ubiquitous.

Its subcellular location is the nucleus. It localises to the cytoplasm. The protein localises to the cell membrane. It carries out the reaction O-phospho-L-seryl-[protein] + H2O = L-seryl-[protein] + phosphate. It catalyses the reaction O-phospho-L-threonyl-[protein] + H2O = L-threonyl-[protein] + phosphate. With respect to regulation, autoinhibited. In the autoinhibited state, the TPR domain interacts with the catalytic region and prevents substrate access to the catalytic pocket. Allosterically activated by various polyunsaturated fatty acids, free long-chain fatty-acids and long-chain fatty acyl-CoA esters, arachidonic acid being the most effective activator. HSP90A and probably RAC1, GNA12 and GNA13 can also release the autoinhibition by the TPR repeat. Activation by RAC1, GNA12 and GNA13 is synergistic with the one produced by fatty acids binding. Inhibited by okadaic acid. In terms of biological role, serine/threonine-protein phosphatase that dephosphorylates a myriad of proteins involved in different signaling pathways including the kinases CSNK1E, ASK1/MAP3K5, PRKDC and RAF1, the nuclear receptors NR3C1, PPARG, ESR1 and ESR2, SMAD proteins and TAU/MAPT. Implicated in wide ranging cellular processes, including apoptosis, differentiation, DNA damage response, cell survival, regulation of ion channels or circadian rhythms, in response to steroid and thyroid hormones, calcium, fatty acids, TGF-beta as well as oxidative and genotoxic stresses. Participates in the control of DNA damage response mechanisms such as checkpoint activation and DNA damage repair through, for instance, the regulation ATM/ATR-signaling and dephosphorylation of PRKDC and TP53BP1. Inhibits ASK1/MAP3K5-mediated apoptosis induced by oxidative stress. Plays a positive role in adipogenesis, mainly through the dephosphorylation and activation of PPARG transactivation function. Also dephosphorylates and inhibits the anti-adipogenic effect of NR3C1. Regulates the circadian rhythms, through the dephosphorylation and activation of CSNK1E. May modulate TGF-beta signaling pathway by the regulation of SMAD3 phosphorylation and protein expression levels. Dephosphorylates and may play a role in the regulation of TAU/MAPT. Through their dephosphorylation, may play a role in the regulation of ions channels such as KCNH2. Dephosphorylate FNIP1, disrupting interaction with HSP90AA1/Hsp90. The chain is Serine/threonine-protein phosphatase 5 (PPP5C) from Homo sapiens (Human).